The sequence spans 130 residues: Cytochrome b-c1 complex subunit 7 (130 aa).

The protein belongs to the UQCRB/QCR7 family. As to quaternary structure, component of the ubiquinol-cytochrome c oxidoreductase (cytochrome b-c1 complex, complex III, CIII), a multisubunit enzyme composed of 3 respiratory subunits cytochrome b, cytochrome c1 and Rieske protein, 2 core protein subunits, and additional low-molecular weight protein subunits. The complex exists as an obligatory dimer and forms supercomplexes (SCs) in the inner mitochondrial membrane with cytochrome c oxidase (complex IV, CIV).

The protein resides in the mitochondrion inner membrane. In terms of biological role, component of the ubiquinol-cytochrome c oxidoreductase, a multisubunit transmembrane complex that is part of the mitochondrial electron transport chain which drives oxidative phosphorylation. The respiratory chain contains 3 multisubunit complexes succinate dehydrogenase (complex II, CII), ubiquinol-cytochrome c oxidoreductase (cytochrome b-c1 complex, complex III, CIII) and cytochrome c oxidase (complex IV, CIV), that cooperate to transfer electrons derived from NADH and succinate to molecular oxygen, creating an electrochemical gradient over the inner membrane that drives transmembrane transport and the ATP synthase. The cytochrome b-c1 complex catalyzes electron transfer from ubiquinol to cytochrome c, linking this redox reaction to translocation of protons across the mitochondrial inner membrane, with protons being carried across the membrane as hydrogens on the quinol. In the process called Q cycle, 2 protons are consumed from the matrix, 4 protons are released into the intermembrane space and 2 electrons are passed to cytochrome c. The chain is Cytochrome b-c1 complex subunit 7 (UBCRBP) from Echinococcus multilocularis (Fox tapeworm).